The following is a 689-amino-acid chain: Translation initiation factor IF-2 (689 aa).

The disordered stretch occupies residues 41 to 109 (DYERVFGGGN…EAPAAEEREA (69 aa)). The span at 61–70 (RKGRQKKRRR) shows a compositional bias: basic residues. Positions 80 to 94 (RGPRAAAPSRPSRGR) are enriched in low complexity. A compositionally biased stretch (basic and acidic residues) spans 96–109 (AAREEAPAAEEREA). The 170-residue stretch at 192-361 (EKPPVITVMG…LVVAELEELR (170 aa)) folds into the tr-type G domain. The tract at residues 201–208 (GHVDHGKT) is G1. GTP is bound at residue 201–208 (GHVDHGKT). The segment at 226 to 230 (GITQH) is G2. The G3 stretch occupies residues 247 to 250 (DTPG). GTP-binding positions include 247 to 251 (DTPGH) and 301 to 304 (NKID). The segment at 301–304 (NKID) is G4. Positions 337-339 (SAK) are G5.

This sequence belongs to the TRAFAC class translation factor GTPase superfamily. Classic translation factor GTPase family. IF-2 subfamily.

The protein localises to the cytoplasm. In terms of biological role, one of the essential components for the initiation of protein synthesis. Protects formylmethionyl-tRNA from spontaneous hydrolysis and promotes its binding to the 30S ribosomal subunits. Also involved in the hydrolysis of GTP during the formation of the 70S ribosomal complex. The polypeptide is Translation initiation factor IF-2 (Rubrobacter xylanophilus (strain DSM 9941 / JCM 11954 / NBRC 16129 / PRD-1)).